Here is a 181-residue protein sequence, read N- to C-terminus: ATP synthase subunit b 2 (181 aa).

Residues 1–18 are compositionally biased toward low complexity; the sequence is MATTTHDAGHGAAEAAHG. Residues 1-20 form a disordered region; that stretch reads MATTTHDAGHGAAEAAHGSS. A helical transmembrane segment spans residues 34 to 54; that stretch reads IFWLLVTLVVIYLILSRIALP.

The protein belongs to the ATPase B chain family. F-type ATPases have 2 components, F(1) - the catalytic core - and F(0) - the membrane proton channel. F(1) has five subunits: alpha(3), beta(3), gamma(1), delta(1), epsilon(1). F(0) has three main subunits: a(1), b(2) and c(10-14). The alpha and beta chains form an alternating ring which encloses part of the gamma chain. F(1) is attached to F(0) by a central stalk formed by the gamma and epsilon chains, while a peripheral stalk is formed by the delta and b chains.

It localises to the cell inner membrane. Functionally, f(1)F(0) ATP synthase produces ATP from ADP in the presence of a proton or sodium gradient. F-type ATPases consist of two structural domains, F(1) containing the extramembraneous catalytic core and F(0) containing the membrane proton channel, linked together by a central stalk and a peripheral stalk. During catalysis, ATP synthesis in the catalytic domain of F(1) is coupled via a rotary mechanism of the central stalk subunits to proton translocation. Its function is as follows. Component of the F(0) channel, it forms part of the peripheral stalk, linking F(1) to F(0). The b'-subunit is a diverged and duplicated form of b found in plants and photosynthetic bacteria. In Ruegeria sp. (strain TM1040) (Silicibacter sp.), this protein is ATP synthase subunit b 2 (atpF2).